A 364-amino-acid polypeptide reads, in one-letter code: MNRAPLKRSRILHMALTGASDPSAEAEANGEKPFLLRALQIALVVSLYWVTSISMVFLNKYLLDSPSLRLDTPIFVTFYQCLVTTLLCKGLSALAACCPGAVDFPSLRLDLRVARSVLPLSVVFIGMITFNNLCLKYVGVAFYNVGRSLTTVFNVLLSYLLLKQTTSFYALLTCGIIIGGFWLGVDQEGAEGTLSWLGTVFGVLASLCVSLNAIYTTKVLPAVDGSIWRLTFYNNVNACILFLPLLLLLGELQALRDFAQLGSAHFWGMMTLGGLFGFAIGYVTGLQIKFTSPLTHNVSGTAKACAQTVLAVLYYEETKSFLWWTSNMMVLGGSSAYTWVRGWEMKKTPEEPSPKDSEKSAMGV.

Helical transmembrane passes span 34-56, 76-98, 111-130, 140-162, 167-185, 195-214, 227-249, and 264-286; these read FLLRALQIALVVSLYWVTSISMV, VTFYQCLVTTLLCKGLSALAACC, LRVARSVLPLSVVFIGMITF, VAFYNVGRSLTTVFNVLLSYLLL, SFYALLTCGIIIGGFWLGV, SWLGTVFGVLASLCVSLNAI, IWRLTFYNNVNACILFLPLLLLL, and AHFWGMMTLGGLFGFAIGYVTGL.

The protein belongs to the TPT transporter family. SLC35C subfamily.

It is found in the golgi apparatus membrane. It carries out the reaction GMP(out) + GDP-beta-L-fucose(in) = GMP(in) + GDP-beta-L-fucose(out). Antiporter specific for GDP-l-fucose and depending on the concomitant reverse transport of GMP. Involved in GDP-fucose import from the cytoplasm into the Golgi lumen. This Homo sapiens (Human) protein is GDP-fucose transporter 1.